A 328-amino-acid chain; its full sequence is Dof zinc finger protein PBF (328 aa).

Positions 33–56 (RDPKQTRAMPQIGGSGERKPRPQL) are disordered. A Dof-type zinc finger spans residues 60–114 (LKCPRCDSNNTKFCYYNNYSMSQPRYFCKACRRYWTHGGTLRNVPIGGGCRKNKH). 4 residues coordinate Zn(2+): cysteine 62, cysteine 65, cysteine 87, and cysteine 90. Disordered regions lie at residues 124–144 (TSSSSSATYAPLSPSTNASSS) and 306–328 (WNKHNNNNNNNNNNNNNNNNKGQ).

In terms of assembly, interacts with the bZIP transcription factor Opaque-2/O2. As to expression, seed endosperm.

The protein localises to the nucleus. Functionally, transcription factor that binds specifically to a 5'-AA[AG]G-3' consensus core sequence. May enhance the DNA binding of the bZIP transcription factor Opaque-2 to O2 binding site elements. This is Dof zinc finger protein PBF (PBF) from Zea mays (Maize).